Consider the following 443-residue polypeptide: ATP-dependent protease ATPase subunit HslU (443 aa).

Residues valine 18 and 60–65 (GVGKTE) each bind ATP. The interval 139–160 (AKNNWGQPEESGEPSSARQNFR) is disordered. ATP is bound by residues aspartate 256, glutamate 321, and arginine 393.

It belongs to the ClpX chaperone family. HslU subfamily. In terms of assembly, a double ring-shaped homohexamer of HslV is capped on each side by a ring-shaped HslU homohexamer. The assembly of the HslU/HslV complex is dependent on binding of ATP.

The protein resides in the cytoplasm. ATPase subunit of a proteasome-like degradation complex; this subunit has chaperone activity. The binding of ATP and its subsequent hydrolysis by HslU are essential for unfolding of protein substrates subsequently hydrolyzed by HslV. HslU recognizes the N-terminal part of its protein substrates and unfolds these before they are guided to HslV for hydrolysis. The sequence is that of ATP-dependent protease ATPase subunit HslU from Sodalis glossinidius (strain morsitans).